Reading from the N-terminus, the 1205-residue chain is Plasma membrane calcium-transporting ATPase 1 (1205 aa).

Topologically, residues 2–104 are cytoplasmic; it reads GDMANNSVAY…KTFLQLVWEA (103 aa). The calmodulin-binding subdomain A stretch occupies residues 94 to 111; that stretch reads PKTFLQLVWEALQDVTLI. A helical membrane pass occupies residues 105–125; sequence LQDVTLIILEIAAVVSLGLSF. Residues 126-153 are Extracellular-facing; the sequence is YQPPGGNEALCGSVNVGEEEEESEAGWI. A helical transmembrane segment spans residues 154-174; that stretch reads EGAAILLSVVCVVLVTAFNDW. Residues 175-351 lie on the Cytoplasmic side of the membrane; it reads SKEKQFRGLQ…KEKSVLQGKL (177 aa). A disordered region spans residues 296–343; that stretch reads EEEKEKEKKDKKTKAQDGAAMEMQPLKSEDGVDGDEKDKKRSNLPKKE. Basic and acidic residues-rich tracts occupy residues 300-310 and 322-343; these read EKEKKDKKTKA and KSED…PKKE. A helical transmembrane segment spans residues 352–371; the sequence is TKLAVQIGKAGLLMSAITVI. Residues 372–403 are Extracellular-facing; it reads ILVLYFVIDTSWVQKRPWLAECTPIYIQYFVK. Residues 404-424 traverse the membrane as a helical segment; sequence FFIIGVTVLVVAVPEGLPLAV. At 425–840 the chain is on the cytoplasmic side; the sequence is TISLAYSVKK…RNVYDSISKF (416 aa). Asp-460 (4-aspartylphosphate intermediate) is an active-site residue. 3 residues coordinate Mg(2+): Asp-460, Thr-462, and Asp-782. The helical transmembrane segment at 841–861 threads the bilayer; it reads LQFQLTVNVVAVIVAFTGACI. Over 862 to 868 the chain is Extracellular; it reads TQDSPLK. A helical membrane pass occupies residues 869–889; it reads AVQMLWVNLIMDTLASLALAT. Over 890 to 912 the chain is Cytoplasmic; it reads EPPTEALLLRKPYGRNKPLISRT. The chain crosses the membrane as a helical span at residues 913 to 933; the sequence is MMKNILGHAFYQLVVVFTLLF. Over 934-956 the chain is Extracellular; the sequence is AGEKIFDIDSGRNAPLHAPPSEH. Residues 957 to 976 traverse the membrane as a helical segment; it reads YTIVFNTFVMMQLFNEINAR. Topologically, residues 977 to 990 are cytoplasmic; sequence KIHGERNVFEGIFN. Residues 991–1012 form a helical membrane-spanning segment; sequence NAIFCTIVLGTFVVQIIIVQFG. The Extracellular segment spans residues 1013–1024; the sequence is GKPFSCSKLSIE. A helical membrane pass occupies residues 1025-1045; it reads QWLWSVFLGMGTLLWGQLIST. Residues 1046–1205 are Cytoplasmic-facing; that stretch reads IPTSRLKFLK…SPLHSLETSL (160 aa). Thr-1101 bears the Phosphothreonine; by PKC mark. Positions 1145–1205 are disordered; the sequence is PLIDDTDAED…SPLHSLETSL (61 aa). Residues 1183–1205 show a composition bias toward polar residues; the sequence is TDMNKSATSSSPGSPLHSLETSL.

Belongs to the cation transport ATPase (P-type) (TC 3.A.3) family. Type IIB subfamily.

It localises to the cell membrane. It carries out the reaction Ca(2+)(in) + ATP + H2O = Ca(2+)(out) + ADP + phosphate + H(+). Its function is as follows. Catalyzes the hydrolysis of ATP coupled with the transport of calcium from the cytoplasm to the extracellular space thereby maintaining intracellular calcium homeostasis. This is Plasma membrane calcium-transporting ATPase 1 from Gallus gallus (Chicken).